Reading from the N-terminus, the 152-residue chain is MGESIMEQVEAIIAPVITEQGLELVDVEYVKEGAHWYLRIYIDKEGGVDIDDCTNVSHLVSEVLDKHDPIAQAYMLEVSSPGLERPLKKDEDFERFTGKLVRVLTKEVYQGYKEFTGYLVGLIEDDIVLEYEKERMAIPRAIVDKANLTFEF.

It belongs to the RimP family.

The protein localises to the cytoplasm. Functionally, required for maturation of 30S ribosomal subunits. This Desulfitobacterium hafniense (strain DSM 10664 / DCB-2) protein is Ribosome maturation factor RimP.